The chain runs to 304 residues: Splicing factor U2af small subunit B (304 aa).

Residues 12–40 (EKDRVNCPFYFKIGACRHGDRCSRLHNRP) form a C3H1-type 1 zinc finger. In terms of domain architecture, RRM spans 44-146 (PTIVLANMYQ…RPIIVEYSPV (103 aa)). A C3H1-type 2 zinc finger spans residues 148 to 175 (DFREATCRQFEENSCNRGGYCNFMHVKQ). Positions 184–207 (LYGGRSRRSHGRSRSPSPRHRRGN) are enriched in basic residues. The interval 184-304 (LYGGRSRRSH…QWNREREEKP (121 aa)) is disordered. The segment covering 208-220 (RDRDDFRRERDGY) has biased composition (basic and acidic residues). The segment covering 221–258 (RGGGDGYRGGGGGGGGDGYRGGDSYRGGGGGGRRGGGS) has biased composition (gly residues). Basic residues predominate over residues 268 to 280 (RRRHGSPPRRARS). Basic and acidic residues predominate over residues 281–304 (PVRESSEERRAKIEQWNREREEKP).

This sequence belongs to the splicing factor SR family.

It is found in the nucleus. Necessary for the splicing of pre-mRNA. The protein is Splicing factor U2af small subunit B (U2AF35B) of Oryza sativa subsp. japonica (Rice).